The sequence spans 595 residues: Flap endonuclease 1 (595 aa).

An N-domain region spans residues 1–106 (MGIKGLTKFI…SELEKRGEKR (106 aa)). Position 34 (aspartate 34) interacts with Mg(2+). Residues arginine 47 and arginine 72 each contribute to the DNA site. 5 residues coordinate Mg(2+): aspartate 88, glutamate 160, glutamate 162, aspartate 181, and aspartate 183. Residues 124–267 (EIKKQSGRTV…KTAYNLIKEY (144 aa)) form an I-domain region. DNA is bound at residue glutamate 160. 2 residues coordinate DNA: glycine 245 and aspartate 247. Position 247 (aspartate 247) interacts with Mg(2+). Positions 350–358 (TQRRLDNFF) are interaction with PCNA. Positions 370–493 (NEESQIKKEV…TGDVYSFPNG (124 aa)) are disordered. The span at 392–401 (NDSSTKLNSK) shows a compositional bias: polar residues. Positions 406 to 425 (PKGEKESKTEKDDGDTHNGN) are enriched in basic and acidic residues. Over residues 426–436 (DNEEEGGEGET) the composition is skewed to acidic residues. Positions 461-475 (HKSDSESGNVKKEST) are enriched in basic and acidic residues.

Belongs to the XPG/RAD2 endonuclease family. FEN1 subfamily. As to quaternary structure, interacts with PCNA. Three molecules of FEN1 bind to one PCNA trimer with each molecule binding to one PCNA monomer. PCNA stimulates the nuclease activity without altering cleavage specificity. The cofactor is Mg(2+). In terms of processing, phosphorylated. Phosphorylation upon DNA damage induces relocalization to the nuclear plasma.

Its subcellular location is the nucleus. It localises to the nucleolus. The protein resides in the nucleoplasm. It is found in the mitochondrion. Functionally, structure-specific nuclease with 5'-flap endonuclease and 5'-3' exonuclease activities involved in DNA replication and repair. During DNA replication, cleaves the 5'-overhanging flap structure that is generated by displacement synthesis when DNA polymerase encounters the 5'-end of a downstream Okazaki fragment. It enters the flap from the 5'-end and then tracks to cleave the flap base, leaving a nick for ligation. Also involved in the long patch base excision repair (LP-BER) pathway, by cleaving within the apurinic/apyrimidinic (AP) site-terminated flap. Acts as a genome stabilization factor that prevents flaps from equilibrating into structures that lead to duplications and deletions. Also possesses 5'-3' exonuclease activity on nicked or gapped double-stranded DNA, and exhibits RNase H activity. Also involved in replication and repair of rDNA and in repairing mitochondrial DNA. This chain is Flap endonuclease 1, found in Plasmodium knowlesi (strain H).